The primary structure comprises 198 residues: Transcriptional regulator GfcR (198 aa).

The protein belongs to the purine/pyrimidine phosphoribosyltransferase family. GfcR subfamily.

This Methanocorpusculum labreanum (strain ATCC 43576 / DSM 4855 / Z) protein is Transcriptional regulator GfcR.